The following is a 299-amino-acid chain: Putative hydrolase YtaP (299 aa).

It belongs to the dienelactone hydrolase family.

This Bacillus subtilis (strain 168) protein is Putative hydrolase YtaP (ytaP).